A 133-amino-acid chain; its full sequence is Arsenate reductase 1 (133 aa).

Active-site nucleophile residues include C10, C82, and C89. 2 disulfide bridges follow: C10–C82 and C82–C89.

Belongs to the low molecular weight phosphotyrosine protein phosphatase family. Thioredoxin-coupled ArsC subfamily.

The protein localises to the cytoplasm. It carries out the reaction arsenate + [thioredoxin]-dithiol + H(+) = arsenite + [thioredoxin]-disulfide + H2O. In terms of biological role, catalyzes the reduction of arsenate [As(V)] to arsenite [As(III)]. The protein is Arsenate reductase 1 of Staphylococcus haemolyticus (strain JCSC1435).